The primary structure comprises 363 residues: NAD(P)H-quinone oxidoreductase subunit 1, chloroplastic (363 aa).

Transmembrane regions (helical) follow at residues 30 to 50 (LVPI…IVWL), 98 to 118 (FSIG…VIPF), 127 to 147 (LSIG…GLLM), 248 to 268 (YSGI…LVSS), 300 to 320 (VFGT…FLFI), and 336 to 356 (LLNL…LLTT).

Belongs to the complex I subunit 1 family. NDH is composed of at least 16 different subunits, 5 of which are encoded in the nucleus.

Its subcellular location is the plastid. The protein resides in the chloroplast thylakoid membrane. The enzyme catalyses a plastoquinone + NADH + (n+1) H(+)(in) = a plastoquinol + NAD(+) + n H(+)(out). It carries out the reaction a plastoquinone + NADPH + (n+1) H(+)(in) = a plastoquinol + NADP(+) + n H(+)(out). In terms of biological role, NDH shuttles electrons from NAD(P)H:plastoquinone, via FMN and iron-sulfur (Fe-S) centers, to quinones in the photosynthetic chain and possibly in a chloroplast respiratory chain. The immediate electron acceptor for the enzyme in this species is believed to be plastoquinone. Couples the redox reaction to proton translocation, and thus conserves the redox energy in a proton gradient. In Drimys granadensis, this protein is NAD(P)H-quinone oxidoreductase subunit 1, chloroplastic.